The following is a 331-amino-acid chain: Ornithine lipid hydroxylase OlsE (331 aa).

5 consecutive transmembrane segments (helical) span residues 13 to 33, 37 to 57, 85 to 105, 120 to 140, and 189 to 209; these read VSSL…YFAF, MHLL…ALFE, GGVQ…ATVA, WPMA…LYMA, and LLGA…FIGL. The Fatty acid hydroxylase domain occupies 126 to 260; the sequence is VVLGLVIAEF…LVIWDQLLGT (135 aa).

This sequence belongs to the sterol desaturase family.

The protein localises to the cell inner membrane. Its pathway is lipid metabolism. Its function is as follows. Involved in the biosynthesis of ornithine lipids (OLs), which are phosphorus-free membrane lipids. Is responsible for the hydroxylation of OL within the ornithine moiety. The polypeptide is Ornithine lipid hydroxylase OlsE (Rhizobium tropici).